A 308-amino-acid polypeptide reads, in one-letter code: Glutaminase (308 aa).

Serine 66, asparagine 117, glutamate 161, asparagine 168, tyrosine 192, tyrosine 244, and valine 262 together coordinate substrate.

The protein belongs to the glutaminase family. In terms of assembly, homotetramer.

It catalyses the reaction L-glutamine + H2O = L-glutamate + NH4(+). This is Glutaminase from Salmonella choleraesuis (strain SC-B67).